A 728-amino-acid chain; its full sequence is Meiotic sister-chromatid recombination protein 3 (728 aa).

Disordered stretches follow at residues 33-171, 236-261, 300-335, 363-403, 422-454, 495-514, and 561-728; these read QLSA…GRTQ, NETDNEKPYSPVSESHLQDDSELNVE, PTHQTSSKYIHNKRKQASTTRRKKRPPAVKNAEAEA, SDNA…VKSN, SAPHEVHNHSVSTHFKSNKAVDPVPEPKSANTG, VGVSHLGSTGSIPPNEQHYL, and YGYQ…KSSR. The segment covering 35–46 has biased composition (low complexity); it reads SAAAASAASAAS. The span at 48–58 shows a compositional bias: polar residues; the sequence is DRTNYSRSHSL. Phosphoserine is present on residues Ser-57 and Ser-64. Low complexity predominate over residues 80–93; that stretch reads STSSAAPPTSRAAA. Polar residues-rich tracts occupy residues 95–106, 118–132, and 140–171; these read QYSQKTYSLRSQ, YTTNGSRMNSMTSGA, and KNKSTAGNNNDSRANSITVKTTQVTDPSGRTQ. A phosphoserine mark is found at Ser-127, Ser-151, and Ser-155. The span at 251 to 261 shows a compositional bias: basic and acidic residues; sequence HLQDDSELNVE. A compositionally biased stretch (basic residues) spans 309 to 326; sequence IHNKRKQASTTRRKKRPP. Ser-363 carries the phosphoserine modification. 2 stretches are compositionally biased toward polar residues: residues 363 to 373 and 385 to 403; these read SDNASAPLGSN and TLRSSSDSPTATANLVKSN. Residues 590 to 634 are compositionally biased toward polar residues; sequence EGVTTAKPSSNEGVMTNPVVTDSPSPLQQQIDSTTASSNGQSQGN. The span at 635-646 shows a compositional bias: low complexity; it reads VPTSAVASTTRT. Thr-646 carries the post-translational modification Phosphothreonine. Polar residues-rich tracts occupy residues 654-668, 675-684, and 691-708; these read NLKSSSSLLQDQTPQ, DPTTSSTNEL, and MVTSTHATKTIQAQTQDP. At Ser-660 the chain carries Phosphoserine. Over residues 711–728 the composition is skewed to basic residues; it reads KHKKSSFFTKLFKKKSSR.

It is found in the cell membrane. Its function is as follows. May be involved in the control of meiotic sister-chromatid recombination. The chain is Meiotic sister-chromatid recombination protein 3 (MSC3) from Saccharomyces cerevisiae (strain ATCC 204508 / S288c) (Baker's yeast).